We begin with the raw amino-acid sequence, 63 residues long: UPF0512 protein X (63 aa).

It belongs to the UPF0512 family.

The chain is UPF0512 protein X from Dictyostelium discoideum (Social amoeba).